The sequence spans 622 residues: ATP-dependent lipid A-core flippase (622 aa).

A run of 5 helical transmembrane segments spans residues isoleucine 32 to phenylalanine 52, valine 91 to isoleucine 111, isoleucine 192 to leucine 212, serine 286 to tryptophan 306, and tyrosine 312 to isoleucine 332. The ABC transmembrane type-1 domain maps to valine 33–threonine 344. Residues phenylalanine 378–isoleucine 611 form the ABC transporter domain. Glycine 410 to serine 417 serves as a coordination point for ATP.

The protein belongs to the ABC transporter superfamily. Lipid exporter (TC 3.A.1.106) family. Homodimer.

The protein resides in the cell inner membrane. The catalysed reaction is ATP + H2O + lipid A-core oligosaccharideSide 1 = ADP + phosphate + lipid A-core oligosaccharideSide 2.. Involved in lipopolysaccharide (LPS) biosynthesis. Translocates lipid A-core from the inner to the outer leaflet of the inner membrane. Transmembrane domains (TMD) form a pore in the inner membrane and the ATP-binding domain (NBD) is responsible for energy generation. The sequence is that of ATP-dependent lipid A-core flippase from Neisseria gonorrhoeae (strain ATCC 700825 / FA 1090).